The following is a 491-amino-acid chain: Maintenance of mitochondrial morphology protein 1 (491 aa).

At 1-22 (MTFQQNEPSAVPAQSSLSFTQG) the chain is on the lumenal side. A helical membrane pass occupies residues 23–43 (FLLGQLSVVLLIGAFIKFFIF). Over 44–491 (GEAPPPPSRG…GTLPGGAAAN (448 aa)) the chain is Cytoplasmic. Disordered regions lie at residues 50–95 (PSRG…PVPS), 275–325 (PPLH…SPKS), and 392–491 (RTGV…AAAN). The span at 54 to 64 (LSHRASTHRRS) shows a compositional bias: basic residues. Composition is skewed to polar residues over residues 65 to 78 (NSIY…GTSR) and 85 to 95 (STSNVLRPVPS). The 254-residue stretch at 131–384 (QPESLDWFNV…EPRVQVVGLP (254 aa)) folds into the SMP-LTD domain. Residues 275–287 (PPLHTPSPSPSPP) are compositionally biased toward pro residues. Composition is skewed to polar residues over residues 300-315 (TNGS…NAQE) and 403-412 (TGSNAASRSA). The span at 422-434 (RADDIGREPDGLR) shows a compositional bias: basic and acidic residues.

The protein belongs to the MMM1 family. As to quaternary structure, homodimer. Component of the ER-mitochondria encounter structure (ERMES) or MDM complex, composed of mmm1, mdm10, mdm12 and mdm34. A mmm1 homodimer associates with one molecule of mdm12 on each side in a pairwise head-to-tail manner, and the SMP-LTD domains of mmm1 and mdm12 generate a continuous hydrophobic tunnel for phospholipid trafficking.

The protein localises to the endoplasmic reticulum membrane. Its function is as follows. Component of the ERMES/MDM complex, which serves as a molecular tether to connect the endoplasmic reticulum (ER) and mitochondria. Components of this complex are involved in the control of mitochondrial shape and protein biogenesis, and function in nonvesicular lipid trafficking between the ER and mitochondria. The mdm12-mmm1 subcomplex functions in the major beta-barrel assembly pathway that is responsible for biogenesis of all outer membrane beta-barrel proteins, and acts in a late step after the SAM complex. The mdm10-mdm12-mmm1 subcomplex further acts in the TOM40-specific pathway after the action of the mdm12-mmm1 complex. Essential for establishing and maintaining the structure of mitochondria and maintenance of mtDNA nucleoids. This is Maintenance of mitochondrial morphology protein 1 from Aspergillus flavus (strain ATCC 200026 / FGSC A1120 / IAM 13836 / NRRL 3357 / JCM 12722 / SRRC 167).